We begin with the raw amino-acid sequence, 347 residues long: Ferrochelatase (347 aa).

[2Fe-2S] cluster is bound at residue Cys-158. Fe cation is bound by residues His-193 and Glu-272. 3 residues coordinate [2Fe-2S] cluster: Cys-332, Cys-339, and Cys-341.

It belongs to the ferrochelatase family. Homodimer. The cofactor is [2Fe-2S] cluster.

It is found in the cytoplasm. It carries out the reaction heme b + 2 H(+) = protoporphyrin IX + Fe(2+). The protein operates within porphyrin-containing compound metabolism; protoheme biosynthesis; protoheme from protoporphyrin-IX: step 1/1. Catalyzes the ferrous insertion into protoporphyrin IX. The polypeptide is Ferrochelatase (Caulobacter vibrioides (strain ATCC 19089 / CIP 103742 / CB 15) (Caulobacter crescentus)).